The sequence spans 468 residues: Glutamate--tRNA ligase (468 aa).

Residues proline 8–threonine 18 carry the 'HIGH' region motif. Positions lysine 243 to arginine 247 match the 'KMSKS' region motif. Lysine 246 is an ATP binding site.

Belongs to the class-I aminoacyl-tRNA synthetase family. Glutamate--tRNA ligase type 1 subfamily. Monomer.

It localises to the cytoplasm. It catalyses the reaction tRNA(Glu) + L-glutamate + ATP = L-glutamyl-tRNA(Glu) + AMP + diphosphate. Catalyzes the attachment of glutamate to tRNA(Glu) in a two-step reaction: glutamate is first activated by ATP to form Glu-AMP and then transferred to the acceptor end of tRNA(Glu). This is Glutamate--tRNA ligase from Thermus thermophilus (strain ATCC BAA-163 / DSM 7039 / HB27).